The chain runs to 760 residues: Semaphorin-4A (760 aa).

Positions 1 to 32 (MALPSLGQDSWSLLRVFFFQLFLLPSLPPASG) are cleaved as a signal peptide. At 33–682 (TGGQGPMPRV…MAAQRSYWPH (650 aa)) the chain is on the extracellular side. Residues 36–494 (QGPMPRVKYH…FSGGIWRVPR (459 aa)) form the Sema domain. A disulfide bridge connects residues C113 and C124. N120 and N135 each carry an N-linked (GlcNAc...) asparagine glycan. 3 disulfides stabilise this stretch: C142–C151, C269–C379, and C293–C339. N496 carries an N-linked (GlcNAc...) asparagine glycan. A PSI domain is found at 496–547 (NCSVYESCVDCVLARDPHCAWDPESRLCSLLSGSTKPWKQDMERGNPEWVCT). Disulfide bonds link C497–C514, C506–C523, and C579–C623. The 59-residue stretch at 572–630 (NSILELPCPHLSALASYHWSHGRAKISEASATVYNGSLLLLPQDGVGGLYQCVATENGY) folds into the Ig-like C2-type domain. The N-linked (GlcNAc...) asparagine glycan is linked to N606. The chain crosses the membrane as a helical span at residues 683–703 (FLIVTVLLAIVLLGVLTLLLA). Residues 704–760 (SPLGALRARGKVQGCGMLPPREKAPLSRDQHLQPSKDHRTSASDVDADNNHLGAEVA) are Cytoplasmic-facing. Residues 720-760 (MLPPREKAPLSRDQHLQPSKDHRTSASDVDADNNHLGAEVA) form a disordered region. Residues 723-744 (PREKAPLSRDQHLQPSKDHRTS) show a composition bias toward basic and acidic residues.

This sequence belongs to the semaphorin family. As to quaternary structure, interacts with PLXNB1, PLXNB2 and PLXNB3. Interacts with PLXND1. Interacts with TIMD2. In terms of tissue distribution, expressed in neurons and glia in the developing hippocampus.

The protein localises to the cell membrane. Its function is as follows. Cell surface receptor for PLXNB1, PLXNB2, PLXNB3 and PLXND1 that plays an important role in cell-cell signaling. Regulates glutamatergic and GABAergic synapse development. Promotes the development of inhibitory synapses in a PLXNB1-dependent manner and promotes the development of excitatory synapses in a PLXNB2-dependent manner. Plays a role in priming antigen-specific T-cells, promotes differentiation of Th1 T-helper cells, and thereby contributes to adaptive immunity. Promotes phosphorylation of TIMD2. Inhibits angiogenesis. Promotes axon growth cone collapse. Inhibits axonal extension by providing local signals to specify territories inaccessible for growing axons. The protein is Semaphorin-4A (Sema4a) of Mus musculus (Mouse).